The sequence spans 257 residues: Ubiquinone biosynthesis O-methyltransferase (257 aa).

S-adenosyl-L-methionine-binding residues include Arg43, Gly77, Asp98, and Met144.

The protein belongs to the methyltransferase superfamily. UbiG/COQ3 family.

It carries out the reaction a 3-demethylubiquinol + S-adenosyl-L-methionine = a ubiquinol + S-adenosyl-L-homocysteine + H(+). The enzyme catalyses a 3-(all-trans-polyprenyl)benzene-1,2-diol + S-adenosyl-L-methionine = a 2-methoxy-6-(all-trans-polyprenyl)phenol + S-adenosyl-L-homocysteine + H(+). The protein operates within cofactor biosynthesis; ubiquinone biosynthesis. In terms of biological role, O-methyltransferase that catalyzes the 2 O-methylation steps in the ubiquinone biosynthetic pathway. In Psychrobacter arcticus (strain DSM 17307 / VKM B-2377 / 273-4), this protein is Ubiquinone biosynthesis O-methyltransferase.